A 463-amino-acid polypeptide reads, in one-letter code: MDITLVKSLYRETEKHMDKEVKINGWVRTVRDSKNFAFVEVNDGSFFKNVQVILESSLENFKELCKMPISTSVEVEGIVQPTPNAKQPFEIKATRISIEGKSSTDYPLQKKRHTFEYLRTIAHLRPRSNAFSAVFRVRSLAAYAVHKFFQERGFVYTNTPIITGSDCEGAGEMFQLTTMDLNNIPKTEEGKIDFSKDFFGSPANLTVSGQLSAETFALAFRNVYTFGPTFRAENSNTARHASEFWMIEPEMAFAELTDYLDNAEDMVKFVINYVMENAPEEMAFFNSFVDKGLFDRLDNVVNSDFKRITYTEAVELLQKSGVKFDYEVEWGIDLQTEHERYLTEQIFKKPVFVTDYPKDIKAFYMRLNDDGKTVAAADLLVPGVGEIIGGSQREERLDVLEKRMEELNLNKEDYWWYLELRKYGETKHSGYGLGFERILMYITGMTNIRDVIPFPRTPGSAEF.

This sequence belongs to the class-II aminoacyl-tRNA synthetase family. In terms of assembly, homodimer.

The protein localises to the cytoplasm. It carries out the reaction tRNA(Asn) + L-asparagine + ATP = L-asparaginyl-tRNA(Asn) + AMP + diphosphate + H(+). The chain is Asparagine--tRNA ligase from Clostridium botulinum (strain ATCC 19397 / Type A).